The sequence spans 160 residues: Cytochrome c-type biogenesis protein CcmE (160 aa).

Topologically, residues Met1–Arg7 are cytoplasmic. Residues Leu8–Ala28 form a helical; Signal-anchor for type II membrane protein membrane-spanning segment. The Periplasmic segment spans residues Leu29–Arg160. Positions 122 and 126 each coordinate heme. Residues Val140–Arg160 are disordered.

The protein belongs to the CcmE/CycJ family.

The protein localises to the cell inner membrane. Functionally, heme chaperone required for the biogenesis of c-type cytochromes. Transiently binds heme delivered by CcmC and transfers the heme to apo-cytochromes in a process facilitated by CcmF and CcmH. The chain is Cytochrome c-type biogenesis protein CcmE from Beijerinckia indica subsp. indica (strain ATCC 9039 / DSM 1715 / NCIMB 8712).